The following is a 456-amino-acid chain: Enolase (456 aa).

(2R)-2-phosphoglycerate is bound at residue Gln164. The active-site Proton donor is Glu207. Residues Asp244, Glu287, and Asp314 each contribute to the Mg(2+) site. (2R)-2-phosphoglycerate contacts are provided by Lys339, Arg368, Ser369, and Lys390. The active-site Proton acceptor is the Lys339.

The protein belongs to the enolase family. In terms of assembly, component of the RNA degradosome, a multiprotein complex involved in RNA processing and mRNA degradation. Mg(2+) serves as cofactor.

The protein localises to the cytoplasm. It localises to the secreted. It is found in the cell surface. It carries out the reaction (2R)-2-phosphoglycerate = phosphoenolpyruvate + H2O. The protein operates within carbohydrate degradation; glycolysis; pyruvate from D-glyceraldehyde 3-phosphate: step 4/5. Functionally, catalyzes the reversible conversion of 2-phosphoglycerate (2-PG) into phosphoenolpyruvate (PEP). It is essential for the degradation of carbohydrates via glycolysis. This chain is Enolase, found in Francisella tularensis subsp. holarctica (strain LVS).